Reading from the N-terminus, the 1203-residue chain is DNA-directed RNA polymerase subunit beta' (1203 aa).

Zn(2+) is bound by residues Cys60, Cys62, Cys75, and Cys78. Asp449, Asp451, and Asp453 together coordinate Mg(2+). 4 residues coordinate Zn(2+): Cys818, Cys892, Cys899, and Cys902.

The protein belongs to the RNA polymerase beta' chain family. As to quaternary structure, the RNAP catalytic core consists of 2 alpha, 1 beta, 1 beta' and 1 omega subunit. When a sigma factor is associated with the core the holoenzyme is formed, which can initiate transcription. Mg(2+) serves as cofactor. It depends on Zn(2+) as a cofactor.

The enzyme catalyses RNA(n) + a ribonucleoside 5'-triphosphate = RNA(n+1) + diphosphate. Its function is as follows. DNA-dependent RNA polymerase catalyzes the transcription of DNA into RNA using the four ribonucleoside triphosphates as substrates. The protein is DNA-directed RNA polymerase subunit beta' of Bacillus cereus (strain ATCC 10987 / NRS 248).